The following is a 119-amino-acid chain: Large ribosomal subunit protein uL22c (119 aa).

This sequence belongs to the universal ribosomal protein uL22 family. As to quaternary structure, part of the 50S ribosomal subunit.

The protein localises to the plastid. It localises to the chloroplast. In terms of biological role, this protein binds specifically to 23S rRNA. Functionally, the globular domain of the protein is located near the polypeptide exit tunnel on the outside of the subunit, while an extended beta-hairpin is found that lines the wall of the exit tunnel in the center of the 70S ribosome. The polypeptide is Large ribosomal subunit protein uL22c (rpl22) (Spirogyra maxima (Green alga)).